A 373-amino-acid polypeptide reads, in one-letter code: Histidinol-phosphate aminotransferase (373 aa).

An N6-(pyridoxal phosphate)lysine modification is found at lysine 230.

Belongs to the class-II pyridoxal-phosphate-dependent aminotransferase family. Histidinol-phosphate aminotransferase subfamily. Homodimer. Pyridoxal 5'-phosphate is required as a cofactor.

The catalysed reaction is L-histidinol phosphate + 2-oxoglutarate = 3-(imidazol-4-yl)-2-oxopropyl phosphate + L-glutamate. Its pathway is amino-acid biosynthesis; L-histidine biosynthesis; L-histidine from 5-phospho-alpha-D-ribose 1-diphosphate: step 7/9. This chain is Histidinol-phosphate aminotransferase, found in Synechococcus sp. (strain ATCC 27144 / PCC 6301 / SAUG 1402/1) (Anacystis nidulans).